A 126-amino-acid chain; its full sequence is uncharacterized protein (126 aa).

Residues arginine 4–arginine 126 enclose the VOC domain. A divalent metal cation-binding residues include histidine 7, glutamate 42, histidine 74, and glutamate 122.

The protein belongs to the glyoxalase I family.

This is an uncharacterized protein from Bacillus subtilis (strain 168).